Consider the following 427-residue polypeptide: Enolase (427 aa).

Q163 lines the (2R)-2-phosphoglycerate pocket. The active-site Proton donor is E205. Mg(2+)-binding residues include D242, E285, and D312. Residues K337, R366, S367, and K388 each contribute to the (2R)-2-phosphoglycerate site. Catalysis depends on K337, which acts as the Proton acceptor.

This sequence belongs to the enolase family. Requires Mg(2+) as cofactor.

It localises to the cytoplasm. The protein localises to the secreted. It is found in the cell surface. The enzyme catalyses (2R)-2-phosphoglycerate = phosphoenolpyruvate + H2O. It participates in carbohydrate degradation; glycolysis; pyruvate from D-glyceraldehyde 3-phosphate: step 4/5. Catalyzes the reversible conversion of 2-phosphoglycerate (2-PG) into phosphoenolpyruvate (PEP). It is essential for the degradation of carbohydrates via glycolysis. This Thiobacillus denitrificans (strain ATCC 25259 / T1) protein is Enolase.